A 354-amino-acid polypeptide reads, in one-letter code: Protein RecA (354 aa).

67 to 74 is a binding site for ATP; sequence GPESSGKT.

This sequence belongs to the RecA family.

Its subcellular location is the cytoplasm. Functionally, can catalyze the hydrolysis of ATP in the presence of single-stranded DNA, the ATP-dependent uptake of single-stranded DNA by duplex DNA, and the ATP-dependent hybridization of homologous single-stranded DNAs. It interacts with LexA causing its activation and leading to its autocatalytic cleavage. This Enterobacter agglomerans (Erwinia herbicola) protein is Protein RecA.